The chain runs to 243 residues: Type III pantothenate kinase (243 aa).

6 to 13 (DIGNTVAK) lines the ATP pocket. Substrate-binding positions include Tyr-86 and 93 to 96 (GYDR). Asp-95 serves as the catalytic Proton acceptor. Residue Asp-116 coordinates K(+). Thr-119 is an ATP binding site. Residue Thr-171 coordinates substrate.

The protein belongs to the type III pantothenate kinase family. In terms of assembly, homodimer. It depends on NH4(+) as a cofactor. Requires K(+) as cofactor.

It is found in the cytoplasm. The catalysed reaction is (R)-pantothenate + ATP = (R)-4'-phosphopantothenate + ADP + H(+). Its pathway is cofactor biosynthesis; coenzyme A biosynthesis; CoA from (R)-pantothenate: step 1/5. Catalyzes the phosphorylation of pantothenate (Pan), the first step in CoA biosynthesis. This is Type III pantothenate kinase from Bacteroides fragilis (strain ATCC 25285 / DSM 2151 / CCUG 4856 / JCM 11019 / LMG 10263 / NCTC 9343 / Onslow / VPI 2553 / EN-2).